The following is a 140-amino-acid chain: Small ribosomal subunit protein eS17x (140 aa).

The protein belongs to the eukaryotic ribosomal protein eS17 family.

In Arabidopsis thaliana (Mouse-ear cress), this protein is Small ribosomal subunit protein eS17x (RPS17C).